Consider the following 505-residue polypeptide: Probable glycine dehydrogenase (decarboxylating) subunit 2 (505 aa).

At Lys274 the chain carries N6-(pyridoxal phosphate)lysine.

Belongs to the GcvP family. C-terminal subunit subfamily. The glycine cleavage system is composed of four proteins: P, T, L and H. In this organism, the P 'protein' is a heterodimer of two subunits. Pyridoxal 5'-phosphate serves as cofactor.

The enzyme catalyses N(6)-[(R)-lipoyl]-L-lysyl-[glycine-cleavage complex H protein] + glycine + H(+) = N(6)-[(R)-S(8)-aminomethyldihydrolipoyl]-L-lysyl-[glycine-cleavage complex H protein] + CO2. In terms of biological role, the glycine cleavage system catalyzes the degradation of glycine. The P protein binds the alpha-amino group of glycine through its pyridoxal phosphate cofactor; CO(2) is released and the remaining methylamine moiety is then transferred to the lipoamide cofactor of the H protein. The protein is Probable glycine dehydrogenase (decarboxylating) subunit 2 of Sulfurisphaera tokodaii (strain DSM 16993 / JCM 10545 / NBRC 100140 / 7) (Sulfolobus tokodaii).